The primary structure comprises 188 residues: Putative manganese efflux pump MntP (188 aa).

The next 6 helical transmembrane spans lie at 3–23 (WLTILGISVALAMDAFAVALA), 39–59 (LGFHFGLFQALMPIGGWLLGM), 65–85 (ISAYDHWIAFGLLAYVGGRMV), 104–124 (GMTMVMLSVATSIDAFAVGLS), 125–145 (IAMLGVSVWLPATVIGLVAGV), and 167–187 (ICGGLVLCLIGLKILLEHTLL).

Belongs to the MntP (TC 9.B.29) family.

It is found in the cell inner membrane. Probably functions as a manganese efflux pump. This Citrifermentans bemidjiense (strain ATCC BAA-1014 / DSM 16622 / JCM 12645 / Bem) (Geobacter bemidjiensis) protein is Putative manganese efflux pump MntP.